Here is a 179-residue protein sequence, read N- to C-terminus: Large ribosomal subunit protein uL5 (179 aa).

It belongs to the universal ribosomal protein uL5 family. As to quaternary structure, part of the 50S ribosomal subunit; part of the 5S rRNA/L5/L18/L25 subcomplex. Contacts the 5S rRNA and the P site tRNA. Forms a bridge to the 30S subunit in the 70S ribosome.

Functionally, this is one of the proteins that bind and probably mediate the attachment of the 5S RNA into the large ribosomal subunit, where it forms part of the central protuberance. In the 70S ribosome it contacts protein S13 of the 30S subunit (bridge B1b), connecting the 2 subunits; this bridge is implicated in subunit movement. Contacts the P site tRNA; the 5S rRNA and some of its associated proteins might help stabilize positioning of ribosome-bound tRNAs. This chain is Large ribosomal subunit protein uL5, found in Syntrophus aciditrophicus (strain SB).